Here is a 171-residue protein sequence, read N- to C-terminus: Thioredoxin-2 (171 aa).

The Thioredoxin domain maps to 41-169 (AFNASPSTSQ…LQALISANHP (129 aa)). Cys-95 and Cys-98 form a disulfide bridge.

The protein belongs to the thioredoxin family.

Its subcellular location is the cytoplasm. It is found in the vacuole. Functionally, thioredoxin involved in responses to oxidative and cell wall stresses. Plays an important role in appressorium formation on hyphal tips. TRX2 may affect invasive growth via the MST11-MST7-PMK1 pathway since it is required for the proper folding or dimerization of MAPKK MST7. The sequence is that of Thioredoxin-2 from Pyricularia oryzae (strain 70-15 / ATCC MYA-4617 / FGSC 8958) (Rice blast fungus).